Reading from the N-terminus, the 299-residue chain is 4-hydroxybenzoate octaprenyltransferase (299 aa).

The next 7 helical transmembrane spans lie at 31–51, 54–74, 105–125, 148–168, 177–197, 241–261, and 277–297; these read IGIY…ADGL, WDVL…GCVI, VLFF…TNPL, QLPQ…AFAA, IWVL…FYAM, FGLG…FAYQ, and FLHN…DKLI.

This sequence belongs to the UbiA prenyltransferase family. It depends on Mg(2+) as a cofactor.

The protein localises to the cell inner membrane. The catalysed reaction is all-trans-octaprenyl diphosphate + 4-hydroxybenzoate = 4-hydroxy-3-(all-trans-octaprenyl)benzoate + diphosphate. The protein operates within cofactor biosynthesis; ubiquinone biosynthesis. In terms of biological role, catalyzes the prenylation of para-hydroxybenzoate (PHB) with an all-trans polyprenyl group. Mediates the second step in the final reaction sequence of ubiquinone-8 (UQ-8) biosynthesis, which is the condensation of the polyisoprenoid side chain with PHB, generating the first membrane-bound Q intermediate 3-octaprenyl-4-hydroxybenzoate. This Saccharophagus degradans (strain 2-40 / ATCC 43961 / DSM 17024) protein is 4-hydroxybenzoate octaprenyltransferase.